The following is a 122-amino-acid chain: Large ribosomal subunit protein uL14 (122 aa).

Belongs to the universal ribosomal protein uL14 family. Part of the 50S ribosomal subunit. Forms a cluster with proteins L3 and L19. In the 70S ribosome, L14 and L19 interact and together make contacts with the 16S rRNA in bridges B5 and B8.

Its function is as follows. Binds to 23S rRNA. Forms part of two intersubunit bridges in the 70S ribosome. This chain is Large ribosomal subunit protein uL14, found in Prosthecochloris aestuarii (strain DSM 271 / SK 413).